A 490-amino-acid chain; its full sequence is Limb region 1 protein (490 aa).

Residues 1-19 lie on the Extracellular side of the membrane; it reads MEGQDEVSAREQHFHSQVR. Residues 20-40 traverse the membrane as a helical segment; sequence ESTICFLLFAILYIVSYFIII. Residues 41-62 are Cytoplasmic-facing; that stretch reads RYKRKSDEQEDEDAVVNRISLF. A helical transmembrane segment spans residues 63–83; it reads LSTFTLAVSAGAVLLLPFSII. At 84 to 110 the chain is on the extracellular side; sequence SNEILLAFPHNYYIQWLNGSLIHGLWN. The helical transmembrane segment at 111 to 131 threads the bilayer; sequence LASLFSNLCLFVLMPFAFFFL. At 132–151 the chain is on the cytoplasmic side; it reads ESEGFAGLKKGIRARILETL. A helical transmembrane segment spans residues 152–172; it reads VMLLLLALLILGMVWVASALI. At 173-187 the chain is on the extracellular side; it reads DSDAASMESLYDLWE. Residues 188–208 traverse the membrane as a helical segment; sequence FYLPYLYSCISLMGCLLLLLC. Topologically, residues 209–291 are cytoplasmic; it reads TPVGLSRMFT…RKKASAWERN (83 aa). Positions 256–287 form a coiled coil; that stretch reads SSVEYNVMELEQELENVKILKTKLERRKKASA. Residues 292–312 traverse the membrane as a helical segment; it reads LVYPAVMVLLLIETSISVLLV. Residues 313-339 lie on the Extracellular side of the membrane; that stretch reads ACNILCLLVDETAMPKGTRGPGIGSAS. Residues 340–360 form a helical membrane-spanning segment; the sequence is LSTFGFVGAALEIILIFYLMV. Topologically, residues 361-383 are cytoplasmic; sequence SSVVGFYSLRFFGNFTPKKDDTT. Residues 384 to 404 form a helical membrane-spanning segment; it reads MTKIIGNCVSILVLSSALPVM. Residues 405–426 are Extracellular-facing; the sequence is SRTLGITRFDLLGDFGRFNWLG. The chain crosses the membrane as a helical span at residues 427 to 447; sequence NFYIVLSYNLLFAIMTTLCLI. The Cytoplasmic portion of the chain corresponds to 448-490; that stretch reads RKFTSAVREELFKALGLHKLHLSDTSRDSETTKPSANGHQKAL.

The protein belongs to the LIMR family.

The protein localises to the membrane. Its function is as follows. Putative membrane receptor. This is Limb region 1 protein (Lmbr1) from Mus musculus (Mouse).